We begin with the raw amino-acid sequence, 332 residues long: Fructose-1,6-bisphosphatase class 1 (332 aa).

Positions 91, 112, 114, and 115 each coordinate Mg(2+). Residues 115 to 118 (DGSS), asparagine 208, tyrosine 241, and lysine 271 contribute to the substrate site. Position 277 (glutamate 277) interacts with Mg(2+).

The protein belongs to the FBPase class 1 family. In terms of assembly, homotetramer. Mg(2+) serves as cofactor.

It is found in the cytoplasm. The catalysed reaction is beta-D-fructose 1,6-bisphosphate + H2O = beta-D-fructose 6-phosphate + phosphate. It participates in carbohydrate biosynthesis; Calvin cycle. This Chlorobium phaeobacteroides (strain DSM 266 / SMG 266 / 2430) protein is Fructose-1,6-bisphosphatase class 1.